The primary structure comprises 118 residues: V-type proton ATPase subunit G 2 (118 aa).

Residues 8-57 adopt a coiled-coil conformation; sequence IQQLLQAEKRAAEKVADARKRKARRLKQAKEEAQMEVDQYRREREQEFQS. Residues 25-90 are disordered; sequence ARKRKARRLK…VQGMQSSQQR (66 aa). A compositionally biased stretch (basic and acidic residues) spans 35-55; that stretch reads QAKEEAQMEVDQYRREREQEF. 2 stretches are compositionally biased toward polar residues: residues 56 to 69 and 78 to 89; these read QSKQQAAMGSQGNL and RRQVQGMQSSQQ.

This sequence belongs to the V-ATPase G subunit family. As to quaternary structure, V-ATPase is a heteromultimeric enzyme made up of two complexes: the ATP-hydrolytic V1 complex and the proton translocation V0 complex. The V1 complex consists of three catalytic AB heterodimers that form a heterohexamer, three peripheral stalks each consisting of EG heterodimers, one central rotor including subunits D and F, and the regulatory subunits C and H. The proton translocation complex V0 consists of the proton transport subunit a, a ring of proteolipid subunits c9c'', rotary subunit d, subunits e and f, and the accessory subunits ATP6AP1/Ac45 and ATP6AP2/PRR. In terms of tissue distribution, expressed in brain (at protein level).

It localises to the melanosome. The protein resides in the cytoplasmic vesicle. The protein localises to the clathrin-coated vesicle membrane. Subunit of the V1 complex of vacuolar(H+)-ATPase (V-ATPase), a multisubunit enzyme composed of a peripheral complex (V1) that hydrolyzes ATP and a membrane integral complex (V0) that translocates protons. V-ATPase is responsible for acidifying and maintaining the pH of intracellular compartments and in some cell types, is targeted to the plasma membrane, where it is responsible for acidifying the extracellular environment. The sequence is that of V-type proton ATPase subunit G 2 from Bos taurus (Bovine).